The primary structure comprises 209 residues: Large ribosomal subunit protein uL4 (209 aa).

The disordered stretch occupies residues 46 to 71 (GTSSTKTRSEVRGSSKKPWKQKGTGR). Positions 59-71 (SSKKPWKQKGTGR) are enriched in basic residues.

The protein belongs to the universal ribosomal protein uL4 family. Part of the 50S ribosomal subunit.

Its function is as follows. One of the primary rRNA binding proteins, this protein initially binds near the 5'-end of the 23S rRNA. It is important during the early stages of 50S assembly. It makes multiple contacts with different domains of the 23S rRNA in the assembled 50S subunit and ribosome. In terms of biological role, forms part of the polypeptide exit tunnel. In Borrelia garinii subsp. bavariensis (strain ATCC BAA-2496 / DSM 23469 / PBi) (Borreliella bavariensis), this protein is Large ribosomal subunit protein uL4.